Here is a 1005-residue protein sequence, read N- to C-terminus: Probable histidine kinase 4 (1005 aa).

Residues 1-37 (MGVGGGGGGGGGEAAAAVAVEGDEAGKGRRWWRVKVK) are Cytoplasmic-facing. A helical membrane pass occupies residues 38 to 58 (LSTVAVVAWVLASAALWAGLH). Topologically, residues 59 to 333 (WRFRRAALHK…YRNKLHVSWS (275 aa)) are extracellular. The CHASE domain maps to 110–321 (HPPALDQDTF…GDPLRKHQMV (212 aa)). Residues 334–354 (AITTPSGVFVICMLVGYIIYA) form a helical membrane-spanning segment. The Cytoplasmic portion of the chain corresponds to 355–1005 (AWSRYDNVKE…QKFLGPCVSS (651 aa)). Positions 389–675 (TVSHEIRTPM…TFTFTAVLRR (287 aa)) constitute a Histidine kinase domain. Phosphohistidine; by autocatalysis is present on His392. 2 Response regulatory domains span residues 700-829 (SALL…FQAL) and 862-999 (NILV…QKFL). Residue Asp912 is modified to 4-aspartylphosphate.

In terms of processing, activation probably requires a transfer of a phosphate group between a His in the transmitter domain and an Asp of the receiver domain. As to expression, highly expressed in young leaves and spikelets, and at lower levels in roots, mature leaves and stems.

The protein localises to the cell membrane. It catalyses the reaction ATP + protein L-histidine = ADP + protein N-phospho-L-histidine.. In terms of biological role, cytokinin receptor related to bacterial two-component regulators. Functions as a histidine kinase and transmits the stress signal to a downstream MAPK cascade. The chain is Probable histidine kinase 4 from Oryza sativa subsp. japonica (Rice).